The following is a 782-amino-acid chain: MRQKTLDVLEFEKIKSLVANETISDLGLEKVNQMMPATNFETVVFQMEETDEIAQIYNKHRLPSLSGLSKVSAFIHRADIGGVLNVSELNLIKRLIQVQNQFKTFYNQLVEEDEGVKYPILDDKMNQLPVLTDLFHQINETCDTYDLYDNASYELQGIRSKISSTNQRIRQNLDRIVKSQANQKKLSDAIVTVRNERNVIPVKAEYRQDFNGIVHDQSASGQTLYIEPSSVVEMNNQISRLRHDEAIEKERILTQLTGYVAADKDALLVTEQVMGQLDFLIAKARYSRSIKGTKPIFKEERTVYLPKAYHPLLNRETVVANTIEFMEDIETVIITGPNTGGKTVTLKTLGLIIVMAQSGLLIPTLDGSQLSVFKNVYCDIGDEQSIEQSLSTFSSHMTNIVEILKHADKHSLVLFDELGAGTDPSEGAALAMSILDHVRKIGSLVMATTHYPELKAYSYNREGVMNASVEFDVDTLSPTYKLLMGVPGRSNAFDISKKLGLSLNIINKAKTMIGTDEKEINEMIESLERNYKRVETQRLELDRLVKEAEQVHDDLSKQYQQFQNYEKSLIEEAKEKANQKIKAATKEADDIIKDLRQLREQKGADVKEHELIDKKKRLDDHYEAKSIKQNVQKQKYDKIVAGDEVKVLSYGQKGEVLEIVNDEEAIVQMGIIKMKLPIEDLEKKQKEKVKPTKMVTRQNRQTIKTELDLRGYRYEDALIELDQYLDQAVLSNYEQVYIIHGKGTGALQKGVQQHLKKHKSVSDFRGGMPSEGGFGVTVATLK.

Residue glycine 336–threonine 343 participates in ATP binding. The Smr domain maps to leucine 707–lysine 782.

It belongs to the DNA mismatch repair MutS family. MutS2 subfamily. As to quaternary structure, homodimer. Binds to stalled ribosomes, contacting rRNA.

Endonuclease that is involved in the suppression of homologous recombination and thus may have a key role in the control of bacterial genetic diversity. In terms of biological role, acts as a ribosome collision sensor, splitting the ribosome into its 2 subunits. Detects stalled/collided 70S ribosomes which it binds and splits by an ATP-hydrolysis driven conformational change. Acts upstream of the ribosome quality control system (RQC), a ribosome-associated complex that mediates the extraction of incompletely synthesized nascent chains from stalled ribosomes and their subsequent degradation. Probably generates substrates for RQC. In Staphylococcus aureus (strain JH1), this protein is Endonuclease MutS2.